A 640-amino-acid polypeptide reads, in one-letter code: 1,4-alpha-glucan branching enzyme GlgB (640 aa).

D318 acts as the Nucleophile in catalysis. The Proton donor role is filled by E371.

The protein belongs to the glycosyl hydrolase 13 family. GlgB subfamily. As to quaternary structure, monomer.

It catalyses the reaction Transfers a segment of a (1-&gt;4)-alpha-D-glucan chain to a primary hydroxy group in a similar glucan chain.. It participates in glycan biosynthesis; glycogen biosynthesis. Its function is as follows. Catalyzes the formation of the alpha-1,6-glucosidic linkages in glycogen by scission of a 1,4-alpha-linked oligosaccharide from growing alpha-1,4-glucan chains and the subsequent attachment of the oligosaccharide to the alpha-1,6 position. The protein is 1,4-alpha-glucan branching enzyme GlgB of Francisella tularensis subsp. holarctica (strain FTNF002-00 / FTA).